Here is a 187-residue protein sequence, read N- to C-terminus: UPF0200 protein MA_4660 (187 aa).

G9–S16 is an ATP binding site.

The protein belongs to the UPF0200 family.

The chain is UPF0200 protein MA_4660 from Methanosarcina acetivorans (strain ATCC 35395 / DSM 2834 / JCM 12185 / C2A).